Consider the following 445-residue polypeptide: DNA polymerase IV (445 aa).

One can recognise a UmuC domain in the interval 49–229 (LAHVDCDAFY…KPVGMIWGVG (181 aa)). 2 residues coordinate Mg(2+): aspartate 53 and aspartate 146. Glutamate 147 is a catalytic residue.

The protein belongs to the DNA polymerase type-Y family. In terms of assembly, monomer. The cofactor is Mg(2+).

It localises to the cytoplasm. The catalysed reaction is DNA(n) + a 2'-deoxyribonucleoside 5'-triphosphate = DNA(n+1) + diphosphate. In terms of biological role, poorly processive, error-prone DNA polymerase involved in untargeted mutagenesis. Copies undamaged DNA at stalled replication forks, which arise in vivo from mismatched or misaligned primer ends. These misaligned primers can be extended by PolIV. Exhibits no 3'-5' exonuclease (proofreading) activity. May be involved in translesional synthesis, in conjunction with the beta clamp from PolIII. This Brucella melitensis biotype 1 (strain ATCC 23456 / CCUG 17765 / NCTC 10094 / 16M) protein is DNA polymerase IV.